Consider the following 94-residue polypeptide: Co-chaperonin GroES (94 aa).

This sequence belongs to the GroES chaperonin family. As to quaternary structure, heptamer of 7 subunits arranged in a ring. Interacts with the chaperonin GroEL.

It localises to the cytoplasm. Its function is as follows. Together with the chaperonin GroEL, plays an essential role in assisting protein folding. The GroEL-GroES system forms a nano-cage that allows encapsulation of the non-native substrate proteins and provides a physical environment optimized to promote and accelerate protein folding. GroES binds to the apical surface of the GroEL ring, thereby capping the opening of the GroEL channel. The chain is Co-chaperonin GroES from Halalkalibacterium halodurans (strain ATCC BAA-125 / DSM 18197 / FERM 7344 / JCM 9153 / C-125) (Bacillus halodurans).